Consider the following 104-residue polypeptide: PTS system lactose-specific EIIA component (104 aa).

The PTS EIIA type-3 domain occupies 4-102; sequence EEATLLGFEI…MKHLIELYKR (99 aa). Residue histidine 78 is the Tele-phosphohistidine intermediate of the active site. Histidine 78 is subject to Phosphohistidine; by HPr. Aspartate 81 provides a ligand contact to Mg(2+).

Homotrimer. Mg(2+) serves as cofactor.

It is found in the cytoplasm. The phosphoenolpyruvate-dependent sugar phosphotransferase system (sugar PTS), a major carbohydrate active transport system, catalyzes the phosphorylation of incoming sugar substrates concomitantly with their translocation across the cell membrane. The enzyme II LacEF PTS system is involved in lactose transport. This chain is PTS system lactose-specific EIIA component, found in Streptococcus mutans serotype c (strain ATCC 700610 / UA159).